Here is a 506-residue protein sequence, read N- to C-terminus: Transcriptional coactivator YAP1 (506 aa).

Pro residues predominate over residues 1–38 (MDPGPPPPAAPPQAQGPPSAPPPPGQAPPSAPGPPAPP). Positions 1 to 60 (MDPGPPPPAAPPQAQGPPSAPPPPGQAPPSAPGPPAPPGSQAAPQAPPAGHQIVHVRGDS) are disordered. Residues 39-50 (GSQAAPQAPPAG) show a composition bias toward low complexity. At Ser60 the chain carries Phosphoserine. Thr62 bears the Phosphothreonine mark. Residues 90–112 (LPDSFFKPPEPKAHSRQASTDAG) form a disordered region. Phosphoserine is present on residues Ser104 and Ser108. Phosphothreonine occurs at positions 109 and 118. Ser126, Ser127, Ser130, and Ser137 each carry phosphoserine. Residues 132 to 160 (QLGAVSPGTLTPTGVSSGPAAAPSAQHLR) form a disordered region. Over residues 147–156 (SSGPAAAPSA) the composition is skewed to low complexity. Ser163 carries the post-translational modification Phosphoserine. 2 WW domains span residues 170-204 (VPLP…PRKA) and 230-263 (PLPD…PRLD). Residues Ser273, Ser288, Ser369, Ser373, Ser384, Ser390, Ser399, Ser402, and Ser405 each carry the phosphoserine modification. Disordered stretches follow at residues 274–307 (QSAP…MRLQ) and 356–416 (TLEQ…RTPD). Over residues 279-289 (KQPPPLAPQSP) the composition is skewed to pro residues. The tract at residues 290 to 506 (PGVLGGGGSS…LDKESFLTWL (217 aa)) is transactivation domain. The span at 371–393 (GMSQELRTMTTSGSDPFLNSGTY) shows a compositional bias: polar residues. The segment covering 401-411 (DSGLSMSSYSV) has biased composition (polar residues). Tyr409 bears the Phosphotyrosine mark. Position 414 is a phosphothreonine (Thr414).

Belongs to the YAP1 family. As to quaternary structure, binds to the SH3 domain of the YES kinase. Binds to WBP1 and WBP2. Binds, in vitro, through the WW1 domain, to neural isoforms of ENAH that contain the PPSY motif. The phosphorylated form interacts with YWHAB. Interacts (via WW domains) with LATS1 (via PPxY motif 2). Interacts with LATS2. Interacts with TEAD1, TEAD2 and TEAD3. Interacts wih TEAD4. Interacts with TP73. Interacts with RUNX1. Interacts with HCK. Interacts (via WW domains) with PTPN14 (via PPxY motif 2); this interaction leads to the cytoplasmic sequestration of YAP1 and inhibits its transcriptional coactivator activity. Interacts (when phosphorylated at Ser-112) with SMAD2, SMAD3 and WWTR1. Interacts with PRRG2 (via cytoplasmic domain). Interacts (via WW domains) with PRRG4 (via cytoplasmic domain). Interacts (phosphorylated) with CLDN18; the interaction sequesters YAP1 away from the nucleus and thereby restricts transcription of YAP1 target genes. Interacts with SMAD1. Interacts with AMOT; the interaction facilitates translocation of YAP1 to the cytoplasm and tight junctions. Interacts with AMOTL2, the interaction is required for ubiquitination of AMOTL2 and localization of YAP1 to tight junctions. Post-translationally, phosphorylated by LATS1 and LATS2; leading to cytoplasmic translocation and inactivation. Phosphorylated by ABL1; leading to YAP1 stabilization, enhanced interaction with TP73 and recruitment onto proapoptotic genes; in response to DNA damage. Phosphorylation at Ser-402 and Ser-405 by CK1 is triggered by previous phosphorylation at Ser-399 by LATS proteins and leads to YAP1 ubiquitination by SCF(beta-TRCP) E3 ubiquitin ligase and subsequent degradation. Phosphorylated at Thr-118, Ser-137, Ser-369 and Thr-414 by MAPK8/JNK1 and MAPK9/JNK2, which is required for the regulation of apoptosis by YAP1. Phosphorylated in the nucleus by PRP4K; phosphorylation leads to nuclear exclusion. Ubiquitinated by SCF(beta-TRCP) E3 ubiquitin ligase.

Its subcellular location is the cytoplasm. It localises to the nucleus. The protein localises to the cell junction. The protein resides in the tight junction. Functionally, transcriptional regulator with dual roles as a coactivator and corepressor. Critical downstream regulatory target in the Hippo signaling pathway, crucial for organ size control and tumor suppression by restricting proliferation and promoting apoptosis. The Hippo signaling pathway core involves a kinase cascade featuring STK3/MST2 and STK4/MST1, along with its regulatory partner SAV1, which phosphorylates and activates LATS1/2 in complex with their regulatory protein, MOB1. This activation leads to the phosphorylation and inactivation of the YAP1 oncoprotein and WWTR1/TAZ. Phosphorylation of YAP1 by LATS1/2 prevents its nuclear translocation, thereby regulating the expression of its target genes. The transcriptional regulation of gene expression requires TEAD transcription factors and modulates cell growth, anchorage-independent growth, and induction of epithelial-mesenchymal transition (EMT). Plays a key role in tissue tension and 3D tissue shape by regulating the cortical actomyosin network, acting via ARHGAP18, a Rho GTPase activating protein that suppresses F-actin polymerization. It also suppresses ciliogenesis by acting as a transcriptional corepressor of TEAD4 target genes AURKA and PLK1. In conjunction with WWTR1, regulates TGFB1-dependent SMAD2 and SMAD3 nuclear accumulation. Synergizes with WBP2 to enhance PGR activity. This Canis lupus familiaris (Dog) protein is Transcriptional coactivator YAP1 (YAP1).